The primary structure comprises 362 residues: MKSSMMKKLESLHRRYEEIESMLSDRTVISNQEKFRELSQEYLKLSDINYCFVQWKNCNHDVIETKLLLLDSELHDVAEQELQMLSKKMKKIETEIQVLLLPCDPNDQQNCFLEIRSASGGDEAAIFSGDLFRMYIKYSEFQNWKTNIIHMTHSLKGGYKDIIVKITGKGSYGKLKFESGGHRVQRVPKTESQGRVHTSTCIVAVIPVVPKKEIEKVNINDLKIDTFRSSGAGGQHVNTTDSAVRITHIPSGQVVECQDERSQHKNKAKALSVLVSRIKAAELYNQRKKNAIQRRDLLGTGMRSDRNRTYNFAQNRVTDHRINLVVYCLDEVLDGKLDVLIEPIIQEHNADVLSNLSNIEFL.

Q235 is subject to N5-methylglutamine.

The protein belongs to the prokaryotic/mitochondrial release factor family. Post-translationally, methylated by PrmC. Methylation increases the termination efficiency of RF1.

It is found in the cytoplasm. Peptide chain release factor 1 directs the termination of translation in response to the peptide chain termination codons UAG and UAA. The protein is Peptide chain release factor 1 of Buchnera aphidicola subsp. Baizongia pistaciae (strain Bp).